We begin with the raw amino-acid sequence, 59 residues long: uncharacterized protein (59 aa).

This is an uncharacterized protein from Haemophilus influenzae (strain ATCC 51907 / DSM 11121 / KW20 / Rd).